The following is a 404-amino-acid chain: Serine/threonine transporter SstT (404 aa).

Transmembrane regions (helical) follow at residues 17 to 37 (IGIGVVIGLLLGILLPDVTAI), 44 to 64 (FVGALKAIAPLLVFALVVQAI), 75 to 95 (ITLIIVLYLLGTFLAALVAVI), 138 to 158 (ALATANYIGVLAWALIFGLAL), 179 to 199 (IVVWIINVAPIGIMGLVFSTV), 212 to 232 (LLILVLVGTMLFVALVVNPLL), 287 to 307 (IPLGAMINMGGAAITINVLTL), 319 to 339 (FLTALLLSVVAAISACGASGV), and 354 to 374 (FGISSDLAMQVVGVGFIVGVI).

This sequence belongs to the dicarboxylate/amino acid:cation symporter (DAACS) (TC 2.A.23) family.

The protein resides in the cell membrane. The enzyme catalyses L-serine(in) + Na(+)(in) = L-serine(out) + Na(+)(out). The catalysed reaction is L-threonine(in) + Na(+)(in) = L-threonine(out) + Na(+)(out). In terms of biological role, involved in the import of serine and threonine into the cell, with the concomitant import of sodium (symport system). This chain is Serine/threonine transporter SstT, found in Streptococcus equi subsp. zooepidemicus (strain MGCS10565).